The primary structure comprises 122 residues: Glycine cleavage system H protein (122 aa).

The Lipoyl-binding domain occupies 19–101; sequence VATVGITDYA…QGKAWFFKIK (83 aa). At K60 the chain carries N6-lipoyllysine.

It belongs to the GcvH family. In terms of assembly, the glycine cleavage system is composed of four proteins: P, T, L and H. (R)-lipoate is required as a cofactor.

Functionally, the glycine cleavage system catalyzes the degradation of glycine. The H protein shuttles the methylamine group of glycine from the P protein to the T protein. The chain is Glycine cleavage system H protein from Bradyrhizobium diazoefficiens (strain JCM 10833 / BCRC 13528 / IAM 13628 / NBRC 14792 / USDA 110).